We begin with the raw amino-acid sequence, 699 residues long: MKMWRLLLLGVATGRCLHEETQKSVRLLRPPFSQMPTHFRSSILPLPGSHEPRPLRIQTYYSRAPVPGEAWDPEGETRALAAVTETTRRIQGILAVLPVQGPLLLSRDPAQYCHAVWGDPDTPNYQRCSILNPGYKGESCLGAKIPDAHLRGYSLWPEHGLPQLIQPDGPGVQNADFLLYVQVAHTSKCHKEPSVIAYAACCQLDSEDRPLAGTIVYCGQHLRSPTLSHDDIVMATLHELLHALGFSGQLFKMWRDCPSGLSARENCSTRKQVTRRDERGQLLLTTPAVSHSLAKHLGVPGTLQGAPLEEKQGSLSSHWESRLLQGSIMTATFHGAQHTRLDPVTLAAFEDSGWYQVNHSAAEELLWGQGSGPDFGLVSTCRTGSSDFFCTGSGLGCHYLHLDKGSCDSDSTLEGCRIYKPLAKGSECWKEENGLHTRAENPHGEIYHRHSRCFLANLTSQVLSKHTSQPSTAPDLEDPTGCCYLHQCTHKGAYEVQVEGSPWIPCLPGKAVQIPGYDGLLYCPQGRLCLRDEGARAATSQPMSFTTQDLLSQLSLRLTGTPGHSLGKGQREELAEVVLQALVMRAGTSRCYFHSPTITTSLVFTVSMWKSPGCHGPSVAMLHRTLTLTLQMKPLQVHHGEAIFTTDYSKLWTSLDHNPSMTELLLSTGFCLLVLILVGALGTLAYQKRAMLQVAPSTT.

An N-terminal signal peptide occupies residues 1 to 18 (MKMWRLLLLGVATGRCLH). At 19–663 (EETQKSVRLL…SLDHNPSMTE (645 aa)) the chain is on the extracellular side. His238 lines the Zn(2+) pocket. Glu239 is an active-site residue. Zn(2+)-binding residues include His242 and His318. A helical membrane pass occupies residues 664–684 (LLLSTGFCLLVLILVGALGTL). Residues 685-699 (AYQKRAMLQVAPSTT) are Cytoplasmic-facing.

The protein belongs to the peptidase M8 family. Zn(2+) serves as cofactor. In terms of tissue distribution, specifically expressed in ciliated left-right organizer.

It is found in the membrane. Putative metalloproteinase that plays a role in left-right patterning process. This is Ciliated left-right organizer metallopeptidase from Mus musculus (Mouse).